The primary structure comprises 189 residues: Crossover junction endodeoxyribonuclease RuvC (189 aa).

Active-site residues include Asp-7, Glu-68, and Asp-141. Mg(2+) is bound by residues Asp-7, Glu-68, and Asp-141.

Belongs to the RuvC family. Homodimer which binds Holliday junction (HJ) DNA. The HJ becomes 2-fold symmetrical on binding to RuvC with unstacked arms; it has a different conformation from HJ DNA in complex with RuvA. In the full resolvosome a probable DNA-RuvA(4)-RuvB(12)-RuvC(2) complex forms which resolves the HJ. The cofactor is Mg(2+).

The protein localises to the cytoplasm. It carries out the reaction Endonucleolytic cleavage at a junction such as a reciprocal single-stranded crossover between two homologous DNA duplexes (Holliday junction).. The RuvA-RuvB-RuvC complex processes Holliday junction (HJ) DNA during genetic recombination and DNA repair. Endonuclease that resolves HJ intermediates. Cleaves cruciform DNA by making single-stranded nicks across the HJ at symmetrical positions within the homologous arms, yielding a 5'-phosphate and a 3'-hydroxyl group; requires a central core of homology in the junction. The consensus cleavage sequence is 5'-(A/T)TT(C/G)-3'. Cleavage occurs on the 3'-side of the TT dinucleotide at the point of strand exchange. HJ branch migration catalyzed by RuvA-RuvB allows RuvC to scan DNA until it finds its consensus sequence, where it cleaves and resolves the cruciform DNA. This is Crossover junction endodeoxyribonuclease RuvC from Chlorobium phaeovibrioides (strain DSM 265 / 1930) (Prosthecochloris vibrioformis (strain DSM 265)).